The following is a 115-amino-acid chain: NTF2-related export protein 1 (115 aa).

Residues Y7–L115 form the NTF2 domain.

It is found in the nucleus. Functionally, stimulator of protein export for NES-containing proteins. Also plays a role in mRNA nuclear export. The chain is NTF2-related export protein 1 (nxt1) from Schizosaccharomyces pombe (strain 972 / ATCC 24843) (Fission yeast).